A 254-amino-acid polypeptide reads, in one-letter code: Thiazole synthase (254 aa).

Residue lysine 93 is the Schiff-base intermediate with DXP of the active site. Residues glycine 154, 181 to 182 (AG), and 203 to 204 (NT) each bind 1-deoxy-D-xylulose 5-phosphate.

The protein belongs to the ThiG family. In terms of assembly, homotetramer. Forms heterodimers with either ThiH or ThiS.

The protein localises to the cytoplasm. It carries out the reaction [ThiS sulfur-carrier protein]-C-terminal-Gly-aminoethanethioate + 2-iminoacetate + 1-deoxy-D-xylulose 5-phosphate = [ThiS sulfur-carrier protein]-C-terminal Gly-Gly + 2-[(2R,5Z)-2-carboxy-4-methylthiazol-5(2H)-ylidene]ethyl phosphate + 2 H2O + H(+). It functions in the pathway cofactor biosynthesis; thiamine diphosphate biosynthesis. Functionally, catalyzes the rearrangement of 1-deoxy-D-xylulose 5-phosphate (DXP) to produce the thiazole phosphate moiety of thiamine. Sulfur is provided by the thiocarboxylate moiety of the carrier protein ThiS. In vitro, sulfur can be provided by H(2)S. This is Thiazole synthase from Ruegeria pomeroyi (strain ATCC 700808 / DSM 15171 / DSS-3) (Silicibacter pomeroyi).